The following is a 286-amino-acid chain: METFKTHITGQFNATVSSITPFAKKTTHYLRTKIGSRVEELSLPEDYVELEQQVDSLKEAYNLVLPIVETVEVDGYDYPTNFRDSITDFGKTVSGKVRNLGNLTPLEQTPLASVGKNLEEKEAAAKPSRTLYNAISRAASEATTKMGAGNPLSSAFGQISVLEEKVGNLQGERDSAISKNFCEQVRAVLYPRFAEAHRVKADVQDKRLQLEMAKLDVESAKPENLEHCKSAVRSAEDELNGAIEHAKILYEQILNKDYNTDLLRSIIKNQLKFHQDAAAALSDITI.

It is found in the cytoplasm. Its function is as follows. Has a role in meiosis. The polypeptide is Meiotically up-regulated gene 64 protein (mug64) (Schizosaccharomyces pombe (strain 972 / ATCC 24843) (Fission yeast)).